A 189-amino-acid polypeptide reads, in one-letter code: MNLFYNLSLKANTLLSAQSGGIKDELKDKFKTLFPTWPMFLATLIAFILVVLILWFLLHKPIKKAMKARQDYIQKNIDEAKLTNDISKQKLNEANKRLAEAYSEADELIKNAKIHGESVIDEYTHKAKNKSKRIIEKAHMEIESERQKMVDDSKSNIAKAAIEISKKIMQKEVTKESQDEVIKNFLKDK.

The helical transmembrane segment at 38–58 (PMFLATLIAFILVVLILWFLL) threads the bilayer.

This sequence belongs to the ATPase B chain family. As to quaternary structure, F-type ATPases have 2 components, F(1) - the catalytic core - and F(0) - the membrane proton channel. F(1) has five subunits: alpha(3), beta(3), gamma(1), delta(1), epsilon(1). F(0) has three main subunits: a(1), b(2) and c(10-14). The alpha and beta chains form an alternating ring which encloses part of the gamma chain. F(1) is attached to F(0) by a central stalk formed by the gamma and epsilon chains, while a peripheral stalk is formed by the delta and b chains.

The protein localises to the cell membrane. Functionally, f(1)F(0) ATP synthase produces ATP from ADP in the presence of a proton or sodium gradient. F-type ATPases consist of two structural domains, F(1) containing the extramembraneous catalytic core and F(0) containing the membrane proton channel, linked together by a central stalk and a peripheral stalk. During catalysis, ATP synthesis in the catalytic domain of F(1) is coupled via a rotary mechanism of the central stalk subunits to proton translocation. Its function is as follows. Component of the F(0) channel, it forms part of the peripheral stalk, linking F(1) to F(0). The sequence is that of ATP synthase subunit b from Mycoplasmopsis agalactiae (strain NCTC 10123 / CIP 59.7 / PG2) (Mycoplasma agalactiae).